The sequence spans 295 residues: 4-hydroxy-tetrahydrodipicolinate synthase (295 aa).

Thr47 serves as a coordination point for pyruvate. Residue Tyr135 is the Proton donor/acceptor of the active site. Residue Lys163 is the Schiff-base intermediate with substrate of the active site. Residue Ile206 participates in pyruvate binding.

This sequence belongs to the DapA family. Homodimer.

The protein resides in the cytoplasm. It carries out the reaction L-aspartate 4-semialdehyde + pyruvate = (2S,4S)-4-hydroxy-2,3,4,5-tetrahydrodipicolinate + H2O + H(+). It participates in amino-acid biosynthesis; L-lysine biosynthesis via DAP pathway; (S)-tetrahydrodipicolinate from L-aspartate: step 3/4. Its function is as follows. Catalyzes the condensation of (S)-aspartate-beta-semialdehyde [(S)-ASA] and pyruvate to 4-hydroxy-tetrahydrodipicolinate (HTPA). The chain is 4-hydroxy-tetrahydrodipicolinate synthase from Staphylococcus aureus (strain MSSA476).